An 86-amino-acid polypeptide reads, in one-letter code: U15-lycotoxin-Ls1d (86 aa).

Positions 1–20 are cleaved as a signal peptide; sequence MNSKIFAVLLLLGLLSCVLS. Residues 21–66 enclose the WAP domain; that stretch reads DQYCPKSSITACKKMNIRNDCCKDDDCTGGSWCCATPCGNFCKYPT. Cystine bridges form between C24–C54, C32–C58, C41–C53, C42–C80, and C47–C62.

It belongs to the venom protein 11 family. 01 (wap-1) subfamily. In terms of processing, contains 5 disulfide bonds. Expressed by the venom gland.

Its subcellular location is the secreted. Has antibacterial activity. The polypeptide is U15-lycotoxin-Ls1d (Lycosa singoriensis (Wolf spider)).